A 183-amino-acid chain; its full sequence is Ferritin heavy chain (183 aa).

Position 1 is an N-acetylmethionine (Met-1). Residue Thr-2 is modified to N-acetylthreonine; in Ferritin heavy chain, N-terminally processed. The 150-residue stretch at 11 to 160 (QNYHQDSEAA…DHVTNLRKMG (150 aa)) folds into the Ferritin-like diiron domain. Positions 28, 63, 66, 108, and 142 each coordinate Fe cation. Ser-179 and Ser-183 each carry phosphoserine.

The protein belongs to the ferritin family. As to quaternary structure, oligomer of 24 subunits. There are two types of subunits: L (light) chain and H (heavy) chain. The major chain can be light or heavy, depending on the species and tissue type. The functional molecule forms a roughly spherical shell with a diameter of 12 nm and contains a central cavity into which the insoluble mineral iron core is deposited. Interacts with NCOA4; NCOA4 promotes targeting of the iron-binding ferritin complex to autolysosomes following starvation or iron depletion.

The protein localises to the cytoplasm. Its subcellular location is the lysosome. It localises to the cytoplasmic vesicle. The protein resides in the autophagosome. The enzyme catalyses 4 Fe(2+) + O2 + 4 H(+) = 4 Fe(3+) + 2 H2O. Stores iron in a soluble, non-toxic, readily available form. Important for iron homeostasis. Has ferroxidase activity. Iron is taken up in the ferrous form and deposited as ferric hydroxides after oxidation. Also plays a role in delivery of iron to cells. Mediates iron uptake in capsule cells of the developing kidney. Delivery to lysosomes is mediated by the cargo receptor NCOA4 for autophagic degradation and release of iron. The polypeptide is Ferritin heavy chain (FTH1) (Pongo abelii (Sumatran orangutan)).